The primary structure comprises 315 residues: Zinc finger CCCH domain-containing protein 23 (315 aa).

The segment at 1 to 21 (MMIGENKNRPHPTIHIPQWDQ) is disordered. C3H1-type zinc fingers lie at residues 131 to 157 (YSGTACPEFRKGSCRRGDSCEFSHGVF) and 165 to 189 (RYRTQPCKDGTSCRRRICFFAHTTE).

In Arabidopsis thaliana (Mouse-ear cress), this protein is Zinc finger CCCH domain-containing protein 23.